The primary structure comprises 251 residues: NADPH-dependent oxidoreductase (251 aa).

This sequence belongs to the flavin oxidoreductase frp family. It depends on FMN as a cofactor.

Its function is as follows. Reduces FMN, organic nitro compounds and disulfide DTNB. Involved in maintenance of the cellular redox state and the disulfide stress response. This is NADPH-dependent oxidoreductase (nfrA) from Staphylococcus saprophyticus subsp. saprophyticus (strain ATCC 15305 / DSM 20229 / NCIMB 8711 / NCTC 7292 / S-41).